Reading from the N-terminus, the 1372-residue chain is Collagen alpha-2(I) chain (1372 aa).

Residues 1–22 form the signal peptide; it reads MLSFVDTRTLLLLAVTSCLATC. Gln23 is modified (pyrrolidone carboxylic acid). Residues 23-85 constitute a propeptide, N-terminal propeptide; that stretch reads QYLQSGSVRK…PPGLTGNFAA (63 aa). Residues 28-1135 form a disordered region; that stretch reads GSVRKGPTGD…DQPRSQPSLR (1108 aa). Positions 59-77 are enriched in pro residues; that stretch reads MGPPGPPGSPGPPGSPAPP. Lys90 carries the post-translational modification Allysine. Residues 95-146 are compositionally biased toward low complexity; it reads GPGPMGLMGPRGPPGAVGAPGPQGFQGPAGEPGEPGQTGPAGPRGPAGSPGK. The span at 147 to 161 shows a compositional bias: basic and acidic residues; that stretch reads AGEDGHPGKPGRPGE. 5-hydroxylysine; alternate is present on Lys183. O-linked (Gal...) hydroxylysine; alternate glycosylation is present at Lys183. 7 stretches are compositionally biased toward low complexity: residues 231 to 260, 285 to 299, 306 to 327, 336 to 351, 390 to 416, 476 to 495, and 519 to 537; these read VGAP…SAGP, AGPR…LSGP, PGTN…AGAP, PGPA…RGLV, PGEA…LPGA, LPGI…RGEA, and PGLA…NGAQ. The span at 544–553 shows a compositional bias: gly residues; the sequence is GVQGGKGEQG. Low complexity predominate over residues 600-639; it reads PGESGAAGPSGPIGSRGPSGAPGPDGNKGEAGAVGAPGSA. Over residues 640 to 649 the composition is skewed to gly residues; that stretch reads GASGPGGLPG. 2 stretches are compositionally biased toward low complexity: residues 681–716 and 725–743; these read RGIP…PRGS and PAGP…QPGA. The segment covering 744-753 has biased composition (basic and acidic residues); sequence KGEKGTKGPK. The span at 755 to 771 shows a compositional bias: low complexity; it reads ENGIVGPTGSVGAAGPS. A compositionally biased stretch (gly residues) spans 781–790; it reads GSRGDGGPPG. Low complexity-rich tracts occupy residues 792-801, 855-882, 905-927, 957-978, and 987-1007; these read TGFPGAAGRT, SGEP…LGLP, ISGP…NGAP, PGSI…VGPA, and PGPA…PSGP. Residues 1011-1022 show a composition bias toward basic and acidic residues; the sequence is RGDKGEPGDKGH. The span at 1095 to 1107 shows a compositional bias: pro residues; sequence AGPPGPPGPPGPP. Positions 1126–1372 are cleaved as a propeptide — C-terminal propeptide; the sequence is DQPRSQPSLR…RVEVGPVCFK (247 aa). The region spanning 1139 to 1372 is the Fibrillar collagen NC1 domain; it reads YEVDATLKSL…RVEVGPVCFK (234 aa). 3 cysteine pairs are disulfide-bonded: Cys1169–Cys1201, Cys1209–Cys1370, and Cys1278–Cys1323. Asp1187, Asn1189, Gln1190, Cys1192, and Asp1195 together coordinate Ca(2+). Asn1273 is a glycosylation site (N-linked (GlcNAc...) asparagine).

It belongs to the fibrillar collagen family. In terms of assembly, trimers of one alpha 2(I) and two alpha 1(I) chains. Interacts (via C-terminus) with TMEM131 (via PapD-L domain); the interaction is direct and is involved in assembly and TRAPPIII ER-to-Golgi transport complex-dependent secretion of collagen. In terms of processing, prolines at the third position of the tripeptide repeating unit (G-X-Y) are hydroxylated in some or all of the chains. In terms of tissue distribution, expressed in kidney glomeruli.

Its subcellular location is the secreted. It is found in the extracellular space. The protein localises to the extracellular matrix. In terms of biological role, type I collagen is a member of group I collagen (fibrillar forming collagen). The protein is Collagen alpha-2(I) chain (Col1a2) of Mus musculus (Mouse).